Reading from the N-terminus, the 249-residue chain is tRNA pseudouridine synthase A (249 aa).

D53 serves as the catalytic Nucleophile. Y111 is a substrate binding site.

The protein belongs to the tRNA pseudouridine synthase TruA family. Homodimer.

It catalyses the reaction uridine(38/39/40) in tRNA = pseudouridine(38/39/40) in tRNA. In terms of biological role, formation of pseudouridine at positions 38, 39 and 40 in the anticodon stem and loop of transfer RNAs. The sequence is that of tRNA pseudouridine synthase A from Streptococcus pyogenes serotype M3 (strain ATCC BAA-595 / MGAS315).